A 128-amino-acid chain; its full sequence is Large ribosomal subunit protein bL12 (128 aa).

As to quaternary structure, homodimer. Part of the 50S ribosomal subunit; present in 6 copies per ribosome. Forms part of the ribosomal stalk which helps the ribosome interact with GTP-bound translation factors. Forms a heptameric L10(L12)2(L12)2(L12)2 complex, where L10 forms an elongated spine to which 3 L12 dimers bind in a sequential fashion.

Forms part of the ribosomal stalk which helps the ribosome interact with GTP-bound translation factors. Is thus essential for accurate translation. In Thermotoga maritima (strain ATCC 43589 / DSM 3109 / JCM 10099 / NBRC 100826 / MSB8), this protein is Large ribosomal subunit protein bL12.